A 244-amino-acid polypeptide reads, in one-letter code: tRNA (guanine-N(1)-)-methyltransferase (244 aa).

S-adenosyl-L-methionine contacts are provided by residues G123 and 143 to 148 (LGDFVM).

It belongs to the RNA methyltransferase TrmD family. In terms of assembly, homodimer.

The protein resides in the cytoplasm. The enzyme catalyses guanosine(37) in tRNA + S-adenosyl-L-methionine = N(1)-methylguanosine(37) in tRNA + S-adenosyl-L-homocysteine + H(+). Its function is as follows. Specifically methylates guanosine-37 in various tRNAs. This chain is tRNA (guanine-N(1)-)-methyltransferase, found in Ruegeria sp. (strain TM1040) (Silicibacter sp.).